The chain runs to 184 residues: dITP/XTP pyrophosphatase (184 aa).

5–10 (SSNRHK) serves as a coordination point for substrate. Mg(2+) contacts are provided by Glu-33 and Asp-62. Residue Asp-62 is the Proton acceptor of the active site. Residues Ser-63, 136 to 139 (WGFD), Lys-158, and 163 to 164 (HR) contribute to the substrate site.

Belongs to the HAM1 NTPase family. In terms of assembly, homodimer. Mg(2+) serves as cofactor.

It carries out the reaction XTP + H2O = XMP + diphosphate + H(+). The enzyme catalyses dITP + H2O = dIMP + diphosphate + H(+). It catalyses the reaction ITP + H2O = IMP + diphosphate + H(+). Pyrophosphatase that catalyzes the hydrolysis of nucleoside triphosphates to their monophosphate derivatives, with a high preference for the non-canonical purine nucleotides XTP (xanthosine triphosphate), dITP (deoxyinosine triphosphate) and ITP. Seems to function as a house-cleaning enzyme that removes non-canonical purine nucleotides from the nucleotide pool, thus preventing their incorporation into DNA/RNA and avoiding chromosomal lesions. This Korarchaeum cryptofilum (strain OPF8) protein is dITP/XTP pyrophosphatase.